Reading from the N-terminus, the 521-residue chain is Lysine--tRNA ligase (521 aa).

The 'HIGH' region motif lies at 32–40 (PSGTVHIGN). A 'KMSKS' region motif is present at residues 280–284 (KISSS).

This sequence belongs to the class-I aminoacyl-tRNA synthetase family.

The protein localises to the cytoplasm. It catalyses the reaction tRNA(Lys) + L-lysine + ATP = L-lysyl-tRNA(Lys) + AMP + diphosphate. The polypeptide is Lysine--tRNA ligase (Borrelia garinii subsp. bavariensis (strain ATCC BAA-2496 / DSM 23469 / PBi) (Borreliella bavariensis)).